A 331-amino-acid chain; its full sequence is Lipoate-protein ligase LplJ (331 aa).

The BPL/LPL catalytic domain maps to Asp27–Asn214. ATP is bound by residues Arg69, Gly74–Tyr77, and Lys131. Lys131 contributes to the (R)-lipoate binding site.

Belongs to the LplA family.

It is found in the cytoplasm. The enzyme catalyses L-lysyl-[lipoyl-carrier protein] + (R)-lipoate + ATP = N(6)-[(R)-lipoyl]-L-lysyl-[lipoyl-carrier protein] + AMP + diphosphate + H(+). Its pathway is protein modification; protein lipoylation via exogenous pathway; protein N(6)-(lipoyl)lysine from lipoate: step 1/2. It functions in the pathway protein modification; protein lipoylation via exogenous pathway; protein N(6)-(lipoyl)lysine from lipoate: step 2/2. Functionally, catalyzes both the ATP-dependent activation of exogenously supplied lipoate to lipoyl-AMP and the transfer of the activated lipoyl onto the lipoyl domains of lipoate-dependent enzymes. Is also able to use octanoate as substrate. The sequence is that of Lipoate-protein ligase LplJ (lplJ) from Bacillus subtilis (strain 168).